The chain runs to 266 residues: MWYSTESNPRIALIKQGYHILAEYNLVKEELKNIYAIPSYACALHWFGVIFVHSGIYAGSVFRFSILLPENFPDDVSLLTVVFSTGILHPHICPQNRTLDLEHFLKEWRKDQHHIWHVLRYIQAIFADPEGSICTGQSSSGDLVVMDEVRNMEALNMLAQSRPEYIKRVQEQAIASRNHIYDRPLTDDPHYIIVEPYCADRHLKIMDQLKSPCWKEATSMDCSQPSEYLGHIDSSRQLDEEEANQLEKLRRARIPEPHRDEAVDFL.

In terms of domain architecture, UBC core spans K15–N178.

It belongs to the ubiquitin-conjugating enzyme family. FTS subfamily.

This Drosophila erecta (Fruit fly) protein is Protein crossbronx-like.